The following is a 233-amino-acid chain: Small ribosomal subunit protein uS2c (233 aa).

This sequence belongs to the universal ribosomal protein uS2 family.

The protein resides in the plastid. It localises to the chloroplast. The chain is Small ribosomal subunit protein uS2c (rps2) from Galdieria sulphuraria (Red alga).